We begin with the raw amino-acid sequence, 437 residues long: GTPase Obg (437 aa).

Residues 2–161 enclose the Obg domain; sequence SDFIDRALIT…RELQLELKVI (160 aa). The 174-residue stretch at 162–335 folds into the OBG-type G domain; sequence ADVGLVGFPN…LQRRIVDILR (174 aa). Residues 168–175, 193–197, 214–217, 284–287, and 316–318 each bind GTP; these read GFPNAGKS, FTTLS, DIPG, NKTD, and SAA. Residues serine 175 and threonine 195 each contribute to the Mg(2+) site. Positions 355–433 constitute an OCT domain; it reads FSNIDPNDFW…IEKAELLWQD (79 aa).

It belongs to the TRAFAC class OBG-HflX-like GTPase superfamily. OBG GTPase family. In terms of assembly, monomer. Mg(2+) serves as cofactor.

Its subcellular location is the cytoplasm. Its function is as follows. An essential GTPase which binds GTP, GDP and possibly (p)ppGpp with moderate affinity, with high nucleotide exchange rates and a fairly low GTP hydrolysis rate. Plays a role in control of the cell cycle, stress response, ribosome biogenesis and in those bacteria that undergo differentiation, in morphogenesis control. This chain is GTPase Obg, found in Herpetosiphon aurantiacus (strain ATCC 23779 / DSM 785 / 114-95).